A 257-amino-acid chain; its full sequence is MVKSHIGSWLLVLFVATWSDIGFCKKRPKPGGGWNTGGSRYPGQGSPGGNRYPPQGGGGWGQPHGGGWGQPHGGGWGQPHGGGWGQPHGGGGWGQGGGSHGQWGKPSKPKTNMKHVAGAAAAGAVVGGLGGYMLGSAMSRPLIHFGNDYEDRYYRENMYRYPNQVYYKPVDQYSNQNNFVHDCVNITVKQHTVTTTTKGENFTETDMKIMERVVEQMCVTQYQRESEAYYQRGASAILFSPPPVILLISLLILLIVG.

The first 24 residues, 1 to 24, serve as a signal peptide directing secretion; sequence MVKSHIGSWLLVLFVATWSDIGFC. Residues 25–41 are interaction with ADGRG6; that stretch reads KKRPKPGGGWNTGGSRY. Residues 25–234 form an interaction with GRB2, ERI3 and SYN1 region; that stretch reads KKRPKPGGGW…ESEAYYQRGA (210 aa). The segment at 27-114 is disordered; it reads RPKPGGGWNT…KPSKPKTNMK (88 aa). 5 tandem repeats follow at residues 54 to 62, 63 to 70, 71 to 78, 79 to 86, and 87 to 95. Residues 54–95 are 5 X 8 AA tandem repeats of P-H-G-G-G-W-G-Q; sequence PQGGGGWGQPHGGGWGQPHGGGWGQPHGGGWGQPHGGGGWGQ. Over residues 55-101 the composition is skewed to gly residues; that stretch reads QGGGGWGQPHGGGWGQPHGGGWGQPHGGGWGQPHGGGGWGQGGGSHG. Positions 64, 65, 66, 72, 73, 74, 80, 81, 82, 88, 90, and 91 each coordinate Cu(2+). The cysteines at positions 183 and 218 are disulfide-linked. Asn-185 and Asn-201 each carry an N-linked (GlcNAc...) asparagine glycan. A lipid anchor (GPI-anchor amidated alanine) is attached at Ala-234. Residues 235–257 constitute a propeptide, removed in mature form; sequence SAILFSPPPVILLISLLILLIVG.

This sequence belongs to the prion family. Monomer and homodimer. Has a tendency to aggregate into amyloid fibrils containing a cross-beta spine, formed by a steric zipper of superposed beta-strands. Soluble oligomers may represent an intermediate stage on the path to fibril formation. Copper binding may promote oligomerization. Interacts with GRB2, APP, ERI3/PRNPIP and SYN1. Mislocalized cytosolically exposed PrP interacts with MGRN1; this interaction alters MGRN1 subcellular location and causes lysosomal enlargement. Interacts with APP. Interacts with KIAA1191. Interacts with ADGRG6.

Its subcellular location is the cell membrane. It is found in the golgi apparatus. Its primary physiological function is unclear. May play a role in neuronal development and synaptic plasticity. May be required for neuronal myelin sheath maintenance. May promote myelin homeostasis through acting as an agonist for ADGRG6 receptor. May play a role in iron uptake and iron homeostasis. Soluble oligomers are toxic to cultured neuroblastoma cells and induce apoptosis (in vitro). Association with GPC1 (via its heparan sulfate chains) targets PRNP to lipid rafts. Also provides Cu(2+) or Zn(2+) for the ascorbate-mediated GPC1 deaminase degradation of its heparan sulfate side chains. This is Major prion protein (PRNP) from Neovison vison (American mink).